Here is a 124-residue protein sequence, read N- to C-terminus: Small ribosomal subunit protein uS13 (124 aa).

The segment at 95–124 (GLPVRGQRTKTNARTRKGPKRTIAGKKKAR) is disordered.

This sequence belongs to the universal ribosomal protein uS13 family. In terms of assembly, part of the 30S ribosomal subunit. Forms a loose heterodimer with protein S19. Forms two bridges to the 50S subunit in the 70S ribosome.

Its function is as follows. Located at the top of the head of the 30S subunit, it contacts several helices of the 16S rRNA. In the 70S ribosome it contacts the 23S rRNA (bridge B1a) and protein L5 of the 50S subunit (bridge B1b), connecting the 2 subunits; these bridges are implicated in subunit movement. Contacts the tRNAs in the A and P-sites. This Mycolicibacterium smegmatis (strain ATCC 700084 / mc(2)155) (Mycobacterium smegmatis) protein is Small ribosomal subunit protein uS13.